The chain runs to 684 residues: Glycine--tRNA ligase beta subunit (684 aa).

The protein belongs to the class-II aminoacyl-tRNA synthetase family. As to quaternary structure, tetramer of two alpha and two beta subunits.

It is found in the cytoplasm. The enzyme catalyses tRNA(Gly) + glycine + ATP = glycyl-tRNA(Gly) + AMP + diphosphate. This Pseudomonas fluorescens (strain Pf0-1) protein is Glycine--tRNA ligase beta subunit.